The primary structure comprises 324 residues: tRNA N6-adenosine threonylcarbamoyltransferase (324 aa).

Positions 107, 111, and 127 each coordinate Fe cation. Substrate-binding positions include 127–131 (YVSGG), aspartate 159, glycine 172, glutamate 176, and asparagine 257. Aspartate 285 contacts Fe cation.

The protein belongs to the KAE1 / TsaD family. Monomer. Component of the KEOPS complex that consists of Kae1, Bud32, Cgi121 and Pcc1; the whole complex dimerizes. It depends on Fe(2+) as a cofactor.

Its subcellular location is the cytoplasm. The enzyme catalyses L-threonylcarbamoyladenylate + adenosine(37) in tRNA = N(6)-L-threonylcarbamoyladenosine(37) in tRNA + AMP + H(+). Functionally, required for the formation of a threonylcarbamoyl group on adenosine at position 37 (t(6)A37) in tRNAs that read codons beginning with adenine. Is a component of the KEOPS complex that is probably involved in the transfer of the threonylcarbamoyl moiety of threonylcarbamoyl-AMP (TC-AMP) to the N6 group of A37. Kae1 likely plays a direct catalytic role in this reaction, but requires other protein(s) of the complex to fulfill this activity. In vitro, binds tRNA, ssRNA, both single- and double-stranded DNA, and exhibits a low ATPase activity. The sequence is that of tRNA N6-adenosine threonylcarbamoyltransferase from Pyrococcus abyssi (strain GE5 / Orsay).